A 698-amino-acid chain; its full sequence is Probable microcin-H47 secretion/processing ATP-binding protein MchF (698 aa).

In terms of domain architecture, Peptidase C39 spans Q26–V145. C32 is an active-site residue. The next 5 membrane-spanning stretches (helical) occupy residues G33–L53, L90–V110, T289–Y311, L315–Y337, and L397–L417. The region spanning L176–I458 is the ABC transmembrane type-1 domain. The ABC transporter domain occupies L492–I698. An ATP-binding site is contributed by G526–T533.

This sequence belongs to the ABC transporter superfamily.

The protein resides in the cell membrane. Functionally, probably involved, in conjunction with MchE, in the secretion of microcin H47. This Escherichia coli protein is Probable microcin-H47 secretion/processing ATP-binding protein MchF (mchF).